The sequence spans 208 residues: Large ribosomal subunit protein uL4 (208 aa).

This sequence belongs to the universal ribosomal protein uL4 family. In terms of assembly, part of the 50S ribosomal subunit.

In terms of biological role, one of the primary rRNA binding proteins, this protein initially binds near the 5'-end of the 23S rRNA. It is important during the early stages of 50S assembly. It makes multiple contacts with different domains of the 23S rRNA in the assembled 50S subunit and ribosome. Functionally, forms part of the polypeptide exit tunnel. The polypeptide is Large ribosomal subunit protein uL4 (Anaplasma marginale (strain Florida)).